The following is a 371-amino-acid chain: MVIQMKFFNREKEIHEILSILEGEPNIIYFIYGPLNSGKTALIKHIIENKLSDDYKVFYINFRTYLISEKREFIEAIFTTKKDDFFEKIKDKSEVLNLITKGAKILTGIPIPEVEFDKLFEEKINDAFQYLNSILLEVKKSGKQPVLILDELQMIKDVVLNWQKYLLKELFQFLVSLTKEQHLCHVFCLSSDSLFIEYVYSAGELEGRAKYLLVDDFDKETALKFMDFLAKEILNKKLSDEDKELIYNYVGGKPVYIYSVIDEMRYRKLEDILNLMLKEETQKLKYFLKELDYIKPKVELKDEIIEIKKDDIINALKLFKENYEVSDDDIPEPVYIYLVKKNILFLNPIEGILKPQSFLIWNAIKKLLNGH.

33 to 40 (GPLNSGKT) serves as a coordination point for ATP.

Belongs to the archaeal ATPase family.

This is an uncharacterized protein from Methanocaldococcus jannaschii (strain ATCC 43067 / DSM 2661 / JAL-1 / JCM 10045 / NBRC 100440) (Methanococcus jannaschii).